Here is a 540-residue protein sequence, read N- to C-terminus: Mitochondrial antiviral-signaling protein (540 aa).

Proline 2 carries the post-translational modification N-acetylproline. The Cytoplasmic portion of the chain corresponds to 2-513; sequence PFAEDKTYKY…REVPCHRPSP (512 aa). Glycyl lysine isopeptide (Lys-Gly) (interchain with G-Cter in ubiquitin) cross-links involve residues lysine 7 and lysine 10. The CARD domain maps to 10–77; that stretch reads KYICRNFSNF…WVEYFIAALR (68 aa). The tract at residues 10–77 is required for interaction with NLRX1; sequence KYICRNFSNF…WVEYFIAALR (68 aa). Cysteine 79 carries the S-palmitoyl cysteine lipid modification. The interval 95–297 is disordered; it reads YQPRTSDRPP…EAPANSLPSK (203 aa). Residues 106 to 122 are compositionally biased toward pro residues; the sequence is PLEPPSLPAERPGPPTP. The segment at 143–147 is interaction with TRAF2; that stretch reads PVQET. Composition is skewed to polar residues over residues 145–165 and 179–216; these read QETQ…QTLS and ESSS…SLTP. Serine 152, serine 157, serine 165, serine 180, and serine 188 each carry phosphoserine. The interaction with TRAF6 stretch occupies residues 153–158; the sequence is PGENSE. At threonine 215 the chain carries Phosphothreonine. Serine 222 and serine 233 each carry phosphoserine. Threonine 234 bears the Phosphothreonine mark. Arginine 236 bears the Asymmetric dimethylarginine mark. Over residues 241–266 the composition is skewed to low complexity; the sequence is PGPTGSVVSTGTSFSSSSPGLASAGA. A phosphoserine mark is found at serine 253 and serine 258. Residues lysine 311 and lysine 325 each participate in a glycyl lysine isopeptide (Lys-Gly) (interchain with G-Cter in ubiquitin) cross-link. Disordered regions lie at residues 314–358 and 373–419; these read ANPA…RAGM and SAST…SELS. 3 stretches are compositionally biased toward polar residues: residues 317–331, 339–355, and 373–382; these read ASVS…TSSK, NALT…NSTR, and SASTVPTDGS. Residues 388-403 show a composition bias toward low complexity; it reads TPAAPTPAGATGGSSA. Serine 408 carries the post-translational modification Phosphoserine. A pLxIS motif motif is present at residues 439–442; that stretch reads LAIS. Serine 442 carries the phosphoserine; by TBK1 modification. Residues 455-460 are interaction with TRAF6; it reads PEENEY. Glycyl lysine isopeptide (Lys-Gly) (interchain with G-Cter in ubiquitin) cross-links involve residues lysine 461 and lysine 500. A (Microbial infection) Glycyl lysine isopeptide (Lys-Gly) (interchain with G-Cter in UFM1) cross-link involves residue lysine 461. The interval 476-507 is disordered; the sequence is IQLLEGNPGPPADPDGGPRPQADRKFQEREVP. Residues 496 to 507 are compositionally biased toward basic and acidic residues; it reads QADRKFQEREVP. Residues 514-534 traverse the membrane as a helical segment; sequence GALWLQVAVTGVLVVTLLVVL. The Mitochondrial intermembrane portion of the chain corresponds to 535-540; the sequence is YRRRLH.

As to quaternary structure, self-associates and polymerizes (via CARD domains) to form 400 nM long three-stranded helical filaments on mitochondria, filament nucleation requires interaction with RIGI whose CARD domains act as a template for filament assembly. Interacts with RIGI, IFIH1/MDA5, TRAF2, TRAF6 and C1QBP. May interact with FADD, RIPK1, CHUK and IKBKB. Interacts (when phosphorylated) with IRF3; following activation and phosphorylation on the pLxIS motif by TBK1, recruits IRF3. Interacts with NLRX1. Interaction with NLRX1 requires the CARD domain. Interacts with PSMA7. Interacts with TRAFD1. Interacts (via C-terminus) with PCBP2 in a complex containing MAVS/IPS1, PCBP2 and ITCH. Interacts with CYLD. Interacts with SRC. Interacts with DHX58/LGP2 and IKBKE. Interacts with STING1. Interacts with IFIT3 (via N-terminus). Interacts with TBK1 only in the presence of IFIT3. Interacts with TTLL12; the interaction prevents MAVS binding to TBK1 and IKBKE. Interacts with MUL1. Interacts with ANKRD17. Interacts with NDFIP1. Interacts with SMURF1; the interaction is mediated by NDFIP1 and leads to MAVS ubiquitination and degradation. Interacts with UBXN1; this interaction inhibits MAVS-mediated antiviral pathway. Interacts (via C-terminus) with GPATCH3; the interaction is markedly increased upon viral infection. Directly interacts (via CARD domain) with ATG5 and ATG12, either as ATG5 and ATG12 monomers or as ATG12-ATG5 conjugates. Interacts with DHX33 (via the helicase C-terminal domain). Interacts with DDX3X (via C-terminus); this interaction occurs rapidly, but transiently after Sendai virus infection. The interaction with DDX3X potentiates MAVS-mediated IFNB induction. Conversely inhibition of this interaction, for instance by HCV core protein, prevents MAVS-mediated IFNB induction. Transiently interacts with TRAF3 early during Sendai virus infection. Interacts with CLPB; the interaction is enhanced by Sendai virus infection. Interacts with TRAF3IP3. Interacts with TOMM70; the interaction is enhanced by Sendai virus infection. Interacts with ZNFX1. Interacts with N4BP3; this interaction promotes the polyubiquitination of MAVS. Interacts with TAX1BP1; this interaction induces MAVS polyubiquitination. Interacts with NLRP3; promoting NLRP3 recruitment to mitochondria and activation of the NLRP3 inflammasome. Interacts with ECSIT; this interaction bridges RIGI to the MAVS complex at the mitochondrion. Interacts with UBL7; this interaction promotes MAVS 'Lys-27'-linked ubiquitination leading to type I interferon production. Interacts (via transmembrane domain) with SMIM30/MAVI1 (via transmembrane domain); the interaction disrupts MAVS interaction with RIGI and inhibits MAVS aggregation, resulting in the repression of type I interferon signaling and innate immune responses. In terms of assembly, (Microbial infection) Interacts with hepatitis C virus (HCV) NS3/4A protease; this interaction leads to MAVS cleavage, thereby preventing the establishment of an antiviral state. (Microbial infection) Interacts with hepatitis GB virus B NS3/4A protease; this interaction leads to MAVS cleavage. As to quaternary structure, (Microbial infection) Interacts with human respiratory syncytial virus/HRSV protein NS1; this interaction disrupts MAVS binding to RIGI. In terms of assembly, (Microbial infection) Interacts with Andes virus Nnon-structural protein NS-S; this interaction may reduce MAVS ubiquitination and leads to inhibition of MAVS-induced type-I IFN signaling pathway. (Microbial infection) Interacts with Seneca Valley virus protease 3C; this interaction allows the cleavage of MAVS and subsequent suppression of host innate immunity. As to quaternary structure, (Microbial infection) Interacts with SARS-CoV virus protein ORF9b; this interaction mediates MAVS proteasomal degradation. In terms of assembly, (Microbial infection) Interacts with SARS-CoV-2 virus protein M; this interaction impairs MAVS self-association and its recruitment of downstream components. (Microbial infection) Interacts with foot-and-mouth disease virus protein VP1; this interaction competes with TRAF3 interaction to MAVS leading to suppression of host innate immunity. As to quaternary structure, (Microbial infection) Interacts with Epstein-Barr virus protein BILF1; this interaction mediates MAVS routing from mitochondria to lysosomes. Post-translationally, following activation, phosphorylated by TBK1 at Ser-442 in the pLxIS motif. The phosphorylated pLxIS motif constitutes an IRF3-binding motif, leading to recruitment of the transcription factor IRF3 to induce type-I interferons and other cytokines. Ubiquitinated. Undergoes 'Lys-48'-linked polyubiquitination catalyzed by ITCH; ITCH-dependent polyubiquitination is mediated by the interaction with PCBP2 and leads to MAVS/IPS1 proteasomal degradation. Ubiquitinated by RNF125, leading to its degradation by the proteasome. Undergoes 'Lys-48'-linked ubiquitination catalyzed by SMURF1. Undergoes 'Lys-48'-linked ubiquitination catalyzed by MARCHF5 at Lys-7 and Lys-500, leading to proteasomal degradation. Ubiquitinated via 'Lys-63'-linked ubiquitination at Lys-10, Lys-311 and Lys-461 by UBE2N and TRIM31, promoting MAVS polymerization and formation of three-stranded helical filaments on mitochondria. Undergoes 'Lys-63'-linked ubiquitination leading to enhanced interaction between MAVS and TRAF2. Undergoes 'Lys-27'-linked ubiquitination by TRIM21 leading to enhanced interaction between MAVS and TBK1. Deubiquitinated by USP10 leading to attenuation of RIGI-mediated MAVS aggregation and production of type I interferon. Undergoes 'Lys-48'-linked polyubiquitination catalyzed by RNF115 leading to its degradation. In terms of processing, palmitoylated by ZHDDC4. Palmitoylation promotes MAVS stabilization and activation by inhibiting 'Lys-48'- but facilitating 'Lys-63'-linked ubiquitination. Post-translationally, proteolytically cleaved by apoptotic caspases during apoptosis, leading to its inactivation. Cleavage by CASP3 during virus-induced apoptosis inactivates it, preventing cytokine overproduction. (Microbial infection) Cleaved and degraded by hepatitis A virus (HAV) protein 3ABC allowing the virus to disrupt the activation of host IRF3 through the MDA5 pathway. In terms of processing, (Microbial infection) Cleaved by the protease 2A of coxsackievirus B3, poliovirus and enterovirus 71 allowing the virus to disrupt the host type I interferon production. Post-translationally, (Microbial infection) Cleaved by Seneca Valley virus protease 3C allowing the virus to suppress interferon type-I production. (Microbial infection) Cleaved by HCV protease NS3/4A, thereby preventing the establishment of an antiviral state. In terms of processing, (Microbial infection) UFMylated by ULF1 in association with Epstein-Barr virus BILF1; leading to MAVS routing to the lysosome. In terms of tissue distribution, present in T-cells, monocytes, epithelial cells and hepatocytes (at protein level). Ubiquitously expressed, with highest levels in heart, skeletal muscle, liver, placenta and peripheral blood leukocytes.

The protein localises to the mitochondrion outer membrane. It is found in the mitochondrion. It localises to the peroxisome. In terms of biological role, adapter required for innate immune defense against viruses. Acts downstream of DHX33, RIGI and IFIH1/MDA5, which detect intracellular dsRNA produced during viral replication, to coordinate pathways leading to the activation of NF-kappa-B, IRF3 and IRF7, and to the subsequent induction of antiviral cytokines such as IFNB and RANTES (CCL5). Peroxisomal and mitochondrial MAVS act sequentially to create an antiviral cellular state. Upon viral infection, peroxisomal MAVS induces the rapid interferon-independent expression of defense factors that provide short-term protection, whereas mitochondrial MAVS activates an interferon-dependent signaling pathway with delayed kinetics, which amplifies and stabilizes the antiviral response. May activate the same pathways following detection of extracellular dsRNA by TLR3. May protect cells from apoptosis. Involved in NLRP3 inflammasome activation by mediating NLRP3 recruitment to mitochondria. This chain is Mitochondrial antiviral-signaling protein, found in Homo sapiens (Human).